A 45-amino-acid polypeptide reads, in one-letter code: Scolopendra 20417.15 Da toxin (45 aa).

The tract at residues 26-45 (KVANGQEAGQPGAXNMKELH) is disordered.

This sequence belongs to the CRISP family. Venom allergen 5-like subfamily. Post-translationally, contains 3 disulfide bonds. In terms of tissue distribution, expressed by the venom gland.

Its subcellular location is the secreted. The protein is Scolopendra 20417.15 Da toxin of Scolopendra viridicornis nigra (Brazilian giant centipede).